The primary structure comprises 344 residues: L-rhamnose-proton symporter (344 aa).

A run of 10 helical transmembrane segments spans residues 4–24 (AITM…CFYA), 38–58 (WSVG…ALLL), 68–88 (FSLS…IGNI), 101–121 (MGIG…TPII), 137–157 (TLLG…AGQL), 175–195 (LVLA…MNAA), 214–234 (LPSY…FCFI), 259–279 (VLLS…YAWG), 290–310 (ISWM…GLVL), and 323–343 (VLSL…IGMA).

This sequence belongs to the L-rhamnose transporter (TC 2.A.7.6) family.

It is found in the cell inner membrane. The enzyme catalyses L-rhamnopyranose(in) + H(+)(in) = L-rhamnopyranose(out) + H(+)(out). Its function is as follows. Uptake of L-rhamnose across the cytoplasmic membrane with the concomitant transport of protons into the cell (symport system). This Escherichia coli O9:H4 (strain HS) protein is L-rhamnose-proton symporter.